The sequence spans 331 residues: UPF0329 protein ECU01_0080/ECU01_1530/ECU02_1560/ECU04_0090/ECU08_0010/ECU08_2090 (331 aa).

Over residues 305 to 320 the composition is skewed to basic and acidic residues; that stretch reads QRSEMEKRDREQDPER. The segment at 305-331 is disordered; the sequence is QRSEMEKRDREQDPERRRLRARRVGSL. Basic residues predominate over residues 321–331; that stretch reads RRLRARRVGSL.

Belongs to the UPF0329 family.

This is UPF0329 protein ECU01_0080/ECU01_1530/ECU02_1560/ECU04_0090/ECU08_0010/ECU08_2090 from Encephalitozoon cuniculi (strain GB-M1) (Microsporidian parasite).